A 635-amino-acid polypeptide reads, in one-letter code: MANWSCQDALKMYNVPYWGAGFFNIDALGRVVVTPDKTRLDCKIALVDIIEQLRKQGYATPVLLRFPDIIKTRINALFGAFEQAIQSYGYKGRYQCVYPIKVNQQNQVIESVTRAFADKPALGLEAGSKPELLAVLSHHHDLGSVIVCNGYKDREYVRHALLGSLLGHHVYIVVEKPSELELILDEAARLNITPRIGVRARLASQGSGKWQASGGEKSKFGLNAAQILRLVERLREADKLDCLQLVHFHLGSQIANIRDIQGGIRECGRFYAELRHLGANIEVVDVGGGLGVDYEGSRSQSHCSANYNLREYANNVVWGIGDVCAEFDLPHPMIISESGRAITAHHAVLISNIVGMESQLPTSLPDAPDAEAPMLLQNMWDSWKELHEKEDPGLLEIFHDSVSDLADVHTQYTLGMLSLHQRAWAEDLHLNLCLKLKVMLDPVNRMHRNLQDELNEKLADKCFVNFSLFQSLPDAWGIDQIFPIMPLSGLDQQPTRRGVIMDITCDSDGMIKEYVDGVGIENSLPMPEMRNDETNYMGFFLVGAYQEILGDLHNLFGDTHSAEVCLNDNGEPVITNIIKGDNVDNLLRYVNIDTSVIRRDYQKLVAHPSLSEETRKALLEELEAGLQGYAYLEDE.

The residue at position 101 (K101) is an N6-(pyridoxal phosphate)lysine. 284–294 (VDVGGGLGVDY) lines the substrate pocket.

It belongs to the Orn/Lys/Arg decarboxylase class-II family. SpeA subfamily. Mg(2+) serves as cofactor. The cofactor is pyridoxal 5'-phosphate.

It carries out the reaction L-arginine + H(+) = agmatine + CO2. It functions in the pathway amine and polyamine biosynthesis; agmatine biosynthesis; agmatine from L-arginine: step 1/1. In terms of biological role, catalyzes the biosynthesis of agmatine from arginine. This chain is Biosynthetic arginine decarboxylase, found in Tolumonas auensis (strain DSM 9187 / NBRC 110442 / TA 4).